We begin with the raw amino-acid sequence, 192 residues long: Erythropoietin (192 aa).

The first 27 residues, 1-27 (MGVHECPAWLWLLLSLVSLPLGLPVPG), serve as a signal peptide directing secretion. Intrachain disulfides connect cysteine 34–cysteine 187 and cysteine 56–cysteine 60. The N-linked (GlcNAc...) asparagine glycan is linked to asparagine 51. Asparagine 65 and asparagine 110 each carry an N-linked (GlcNAc...) asparagine glycan. A glycan (O-linked (GalNAc...) serine) is linked at serine 152.

Belongs to the EPO/TPO family. Produced by kidney or liver of adult mammals and by liver of fetal or neonatal mammals.

The protein resides in the secreted. Hormone involved in the regulation of erythrocyte proliferation and differentiation and the maintenance of a physiological level of circulating erythrocyte mass. Binds to EPOR leading to EPOR dimerization and JAK2 activation thereby activating specific downstream effectors, including STAT1 and STAT3. The protein is Erythropoietin (EPO) of Macaca fascicularis (Crab-eating macaque).